Reading from the N-terminus, the 484-residue chain is 1,3-beta-glucanosyltransferase GAS5 (484 aa).

The first 19 residues, 1 to 19 (MLLRSLTSAFVLSAGLAQA), serve as a signal peptide directing secretion. 2 N-linked (GlcNAc...) asparagine glycosylation sites follow: Asn24 and Asn60. Cys71 and Cys100 are oxidised to a cystine. Residues Tyr89, Asn159, and Glu160 each contribute to the (1,3-beta-D-glucosyl)n site. Glu160 acts as the Proton donor in catalysis. Asn166 carries an N-linked (GlcNAc...) asparagine glycan. Residues Asp201 and Arg206 each coordinate (1,3-beta-D-glucosyl)n. Intrachain disulfides connect Cys215–Cys348 and Cys234–Cys265. The Nucleophile role is filled by Glu262. Position 295 (Tyr295) interacts with (1,3-beta-D-glucosyl)n. Residues Asn299, Asn344, and Asn359 are each glycosylated (N-linked (GlcNAc...) asparagine). Residues 383–462 (TGIATQQSCD…SSQSSSKSKG (80 aa)) are disordered. Residues 394–404 (KDDDDEEDDDT) are compositionally biased toward acidic residues. Residues 405–462 (SSSSSSSSSSSSSASSSSESSSSTSKASSSSPSASETSLLKSAASATSSSQSSSKSKG) are compositionally biased toward low complexity. The GPI-anchor amidated glycine moiety is linked to residue Gly462. A propeptide spans 463–484 (AAGIIEIPLIFRALAELYNLVL) (removed in mature form).

The protein belongs to the glycosyl hydrolase 72 family. Post-translationally, the GPI-anchor is attached to the protein in the endoplasmic reticulum and serves to target the protein to the cell surface. There, the glucosamine-inositol phospholipid moiety is cleaved off and the GPI-modified mannoprotein is covalently attached via its lipidless GPI glycan remnant to the 1,6-beta-glucan of the outer cell wall layer.

It is found in the secreted. The protein localises to the cell wall. It localises to the membrane. In terms of biological role, splits internally a 1,3-beta-glucan molecule and transfers the newly generated reducing end (the donor) to the non-reducing end of another 1,3-beta-glucan molecule (the acceptor) forming a 1,3-beta linkage, resulting in the elongation of 1,3-beta-glucan chains in the cell wall. Involved in cell wall biosynthesis and morphogenesis. The chain is 1,3-beta-glucanosyltransferase GAS5 (GAS5) from Saccharomyces cerevisiae (strain ATCC 204508 / S288c) (Baker's yeast).